Consider the following 754-residue polypeptide: Polyadenylate-binding protein, cytoplasmic and nuclear (754 aa).

A compositionally biased stretch (polar residues) spans 1–25 (MSAEVSTTPAADNVNGTPEATNAAA). Residues 1–52 (MSAEVSTTPAADNVNGTPEATNAAATSAPEVTAVESSSPTSPNNNNQPHSAS) form a disordered region. Low complexity predominate over residues 36–46 (SSSPTSPNNNN). RRM domains lie at 51-129 (ASLY…WSQR), 139-216 (GNVF…HHIS), 232-309 (TNIY…RAQK), and 335-465 (VNLY…LAQR). Disordered stretches follow at residues 365-420 (KVMR…KKSD) and 595-648 (RGGG…EEAP). The span at 366 to 420 (VMRDSTPAERTETPDSEKEKEVNKENEKKEDEEKAAEEKPKESDEEKKDETKKSD) shows a compositional bias: basic and acidic residues. The segment covering 610-633 (GMRGPGYQGRGGPQGGPRPQGGRG) has biased composition (gly residues). Low complexity predominate over residues 634–648 (QNAAAQPAAGREEAP). Residues 649-726 (AGALTAQALN…ALSVYDEYMK (78 aa)) enclose the PABC domain. A disordered region spans residues 729–754 (GEGEAPADADKPKEAAKETATEENKS).

It belongs to the polyadenylate-binding protein type-1 family.

It is found in the cytoplasm. It localises to the nucleus. In terms of biological role, binds the poly(A) tail of mRNA. Appears to be an important mediator of the multiple roles of the poly(A) tail in mRNA biogenesis, stability and translation. In the nucleus, involved in both mRNA cleavage and polyadenylation. Is also required for efficient mRNA export to the cytoplasm. Acts in concert with a poly(A)-specific nuclease (PAN) to affect poly(A) tail shortening, which may occur concomitantly with either nucleocytoplasmic mRNA transport or translational initiation. In the cytoplasm, stimulates translation initiation and regulates mRNA decay through translation termination-coupled poly(A) shortening, probably mediated by PAN. This is Polyadenylate-binding protein, cytoplasmic and nuclear (pab1) from Aspergillus clavatus (strain ATCC 1007 / CBS 513.65 / DSM 816 / NCTC 3887 / NRRL 1 / QM 1276 / 107).